A 441-amino-acid chain; its full sequence is Importin subunit alpha-8 (441 aa).

ARM repeat units follow at residues 39 to 79 (QRDI…NIAV), 80 to 118 (DNPG…NVAG), 121 to 158 (IHYR…NLCR), 160 to 199 (KPHP…HLSE), 202 to 241 (EDGI…AMTA), 244 to 284 (HQQT…NITA), 287 to 326 (KEQI…NMAL), and 330 to 370 (HDQI…NMLK).

This sequence belongs to the importin alpha family. Forms a complex with importin subunit beta-1.

It is found in the nucleus envelope. Binds to conventional NLS motifs and mediates nuclear protein import across the nuclear envelope. The protein is Importin subunit alpha-8 of Arabidopsis thaliana (Mouse-ear cress).